Reading from the N-terminus, the 101-residue chain is NAD(P)H-quinone oxidoreductase subunit 4L, chloroplastic (101 aa).

3 helical membrane passes run 2 to 22 (MLEHVLVLSAYLFSIGIYGLI), 32 to 52 (MCLELILNAVNINFVTFSDFF), and 61 to 81 (IFSIFVIAIAAAEAAIGPAIV).

This sequence belongs to the complex I subunit 4L family. NDH is composed of at least 16 different subunits, 5 of which are encoded in the nucleus.

It localises to the plastid. It is found in the chloroplast thylakoid membrane. The catalysed reaction is a plastoquinone + NADH + (n+1) H(+)(in) = a plastoquinol + NAD(+) + n H(+)(out). The enzyme catalyses a plastoquinone + NADPH + (n+1) H(+)(in) = a plastoquinol + NADP(+) + n H(+)(out). NDH shuttles electrons from NAD(P)H:plastoquinone, via FMN and iron-sulfur (Fe-S) centers, to quinones in the photosynthetic chain and possibly in a chloroplast respiratory chain. The immediate electron acceptor for the enzyme in this species is believed to be plastoquinone. Couples the redox reaction to proton translocation, and thus conserves the redox energy in a proton gradient. This chain is NAD(P)H-quinone oxidoreductase subunit 4L, chloroplastic, found in Morus indica (Mulberry).